Here is a 242-residue protein sequence, read N- to C-terminus: Probable septum site-determining protein MinC (242 aa).

It belongs to the MinC family. Interacts with MinD and FtsZ.

Its function is as follows. Cell division inhibitor that blocks the formation of polar Z ring septums. Rapidly oscillates between the poles of the cell to destabilize FtsZ filaments that have formed before they mature into polar Z rings. Prevents FtsZ polymerization. The protein is Probable septum site-determining protein MinC of Buchnera aphidicola subsp. Schizaphis graminum (strain Sg).